A 116-amino-acid chain; its full sequence is Putative membrane protein (116 aa).

Residues 13–33 (VISIITFILVIAIFVIEIVSC) traverse the membrane as a helical segment.

Its subcellular location is the host membrane. In Alethinophid 1 reptarenavirus (isolate AlRrV1/Boa/USA/BC/2009) (Golden Gate virus), this protein is Putative membrane protein.